Here is a 266-residue protein sequence, read N- to C-terminus: Energy-coupling factor transporter ATP-binding protein EcfA2 (266 aa).

The ABC transporter domain occupies 3-238 (IEVVNVSHIF…YDPRFFTSKM (236 aa)). Residue 43-48 (GSGKST) participates in ATP binding. Glutamate 164 serves as the catalytic Proton acceptor. Positions 220–266 (GTRMEFLEKYDPRFFTSKMLVMRRLVLKGEDPFSMSDDELLERVCNS) are required for heterodimer formation.

The protein belongs to the ABC transporter superfamily. Energy-coupling factor EcfA family. Forms a heterodimer with EcfA1. Forms a stable energy-coupling factor (ECF) transporter complex composed of 2 membrane-embedded substrate-binding proteins (S component, RibU, BioY), 2 ATP-binding proteins (A component) and 2 transmembrane proteins (T component) upon coexpression in E.coli. Stable subcomplexes with both A plus T components can also be isolated. This complex interacts with at least 2 substrate-specific components, BioY and RibU.

The protein resides in the cell inner membrane. Functionally, ATP-binding (A) component of a common energy-coupling factor (ECF) ABC-transporter complex. Unlike classic ABC transporters this ECF transporter provides the energy necessary to transport a number of different substrates. Expression of the complex plus RibU in E.coli allows riboflavin uptake; uptake does not occur in the absence of RibU or the EcfA1A2T complex. This Thermotoga maritima (strain ATCC 43589 / DSM 3109 / JCM 10099 / NBRC 100826 / MSB8) protein is Energy-coupling factor transporter ATP-binding protein EcfA2 (ecfA2).